Here is a 495-residue protein sequence, read N- to C-terminus: Oxidoreductase AflY (495 aa).

Residues 1-22 are disordered; the sequence is MGSHAPAVAGKPDPKKGPYQAT.

It belongs to the questin oxidase family.

The protein operates within mycotoxin biosynthesis; aflatoxin biosynthesis. In terms of biological role, oxidoreductase; part of the gene cluster that mediates the biosynthesis of aflatoxins, a group of polyketide-derived furanocoumarins, and part of the most toxic and carcinogenic compounds among the known mycotoxins. The four major aflatoxins produced by A.parasiticus are aflatoxin B1 (AFB1), aflatoxin B2 (AFB2), aflatoxin G1 (AFG1) and aflatoxin G2 (AFG2). Within the aflatoxin pathway, the oxidoreductase aflY seems to be involved in the conversion of versicolorin A (VERA) to demethylsterigmatocystin (DMST), through probable Baeyer-Villiger oxidation required for the formation of the xanthone ring. The biosynthesis of aflatoxins begins with the norsolorinic acid synthase aflC that combines a hexanoyl starter unit produced by the fatty acid synthase aflA/aflB and 7 malonyl-CoA extender units to synthesize the precursor NOR. The second step is the conversion of NOR to averantin and requires the norsolorinic acid ketoreductase aflD, which catalyzes the dehydration of norsolorinic acid to form (1'S)-averantin. The norsolorinic acid reductases aflE and aflF may also play a role in the conversion of NOR to AVN. The cytochrome P450 monooxygenase aflG then catalyzes the hydroxylation of AVN to 5'hydroxyaverantin (HAVN). The next step is performed by the 5'-hydroxyaverantin dehydrogenase aflH that transforms HAVN to 5'-oxoaverantin (OAVN) which is further converted to averufin (AVF) by aflK that plays a dual role in the pathway, as a 5'-oxoaverantin cyclase that mediates conversion of 5'-oxoaverantin, as well as a versicolorin B synthase in a later step in the pathway. The averufin oxidase aflI catalyzes the conversion of AVF to versiconal hemiacetal acetate (VHA). VHA is then the substrate for the versiconal hemiacetal acetate esterase aflJ to yield versiconal (VAL). Versicolorin B synthase aflK then converts VAL to versicolorin B (VERB) by closing the bisfuran ring of aflatoxin which is required for DNA-binding, thus giving to aflatoxin its activity as a mutagen. Then, the activity of the versicolorin B desaturase aflL leads to versicolorin A (VERA). A branch point starts from VERB since it can also be converted to dihydrodemethylsterigmatocystin (DMDHST), probably also by aflL, VERA being a precursor for aflatoxins B1 and G1, and DMDHST for aflatoxins B2 and G2. Next, the versicolorin reductase aflM and the cytochrome P450 monooxygenase aflN are involved in conversion of VERA to demethylsterigmatocystin (DMST). AflX and aflY seem also involved in this step, through probable aflX-mediated epoxide ring-opening step following versicolorin A oxidation and aflY-mediated Baeyer-Villiger oxidation required for the formation of the xanthone ring. The methyltransferase aflO then leads to the modification of DMST to sterigmatocystin (ST), and of DMDHST to dihydrosterigmatocystin (DHST). Both ST and DHST are then substrates of the O-methyltransferase aflP to yield O-methylsterigmatocystin (OMST) and dihydro-O-methylsterigmatocystin (DHOMST), respectively. Finally OMST is converted to aflatoxins B1 and G1, and DHOMST to aflatoxins B2 and G2, via the action of several enzymes including O-methylsterigmatocystin oxidoreductase aflQ, the cytochrome P450 monooxygenase aflU, but also the NADH-dependent flavin oxidoreductase nadA which is specifically required for the synthesis of AFG1. The protein is Oxidoreductase AflY of Aspergillus parasiticus (strain ATCC 56775 / NRRL 5862 / SRRC 143 / SU-1).